Consider the following 177-residue polypeptide: Probable DNA-directed RNA polymerase subunit delta (177 aa).

Residues 14–83 (LSMIEVARAI…GENKWGLRSW (70 aa)) enclose the HTH HARE-type domain. 2 stretches are compositionally biased toward acidic residues: residues 117–134 (GDDD…DEDN) and 142–157 (EYDD…EVES). The interval 117–164 (GDDDAIDYGHDDPEDEDNYPGSVSSEYDDENPDDEKDEVESYDQKSTK) is disordered.

The protein belongs to the RpoE family. As to quaternary structure, RNAP is composed of a core of 2 alpha, a beta and a beta' subunits. The core is associated with a delta subunit and one of several sigma factors.

Its function is as follows. Participates in both the initiation and recycling phases of transcription. In the presence of the delta subunit, RNAP displays an increased specificity of transcription, a decreased affinity for nucleic acids, and an increased efficiency of RNA synthesis because of enhanced recycling. In Streptococcus suis (strain 98HAH33), this protein is Probable DNA-directed RNA polymerase subunit delta.